A 454-amino-acid polypeptide reads, in one-letter code: ESX-1 secretion-associated protein EspB (454 aa).

Disordered regions lie at residues 17–40 (RADE…SGLT), 82–128 (GEVE…AGES), and 391–454 (AGQG…QDNK). Positions 391–422 (AGQGGGAAGRGMAGGGMGMPMGGAGQGQGGAK) are enriched in gly residues.

Belongs to the EspB family. Post-translationally, cleaved at close to the C-terminus during secretion.

It localises to the secreted. The sequence is that of ESX-1 secretion-associated protein EspB from Mycobacterium marinum (strain ATCC BAA-535 / M).